Consider the following 473-residue polypeptide: GTPase Der (473 aa).

2 consecutive EngA-type G domains span residues 3–167 (LTIA…GKDK) and 204–379 (IRIA…RIWN). Residues 9–16 (GRPNVGKS), 56–60 (DTAGL), 119–122 (NKSE), 210–217 (GRPNTGKS), 257–261 (DTAGL), and 322–325 (NKWD) each bind GTP. The KH-like domain maps to 380-464 (RRISTGKLNR…PIRLSLRTSD (85 aa)).

It belongs to the TRAFAC class TrmE-Era-EngA-EngB-Septin-like GTPase superfamily. EngA (Der) GTPase family. Associates with the 50S ribosomal subunit.

Functionally, GTPase that plays an essential role in the late steps of ribosome biogenesis. This Bartonella bacilliformis (strain ATCC 35685 / KC583 / Herrer 020/F12,63) protein is GTPase Der.